The primary structure comprises 245 residues: P2Y purinoceptor 13 (245 aa).

Over 1–9 the chain is Extracellular; sequence QLRAFVCRL. C7 and C85 are disulfide-bonded. The chain crosses the membrane as a helical span at residues 10–30; the sequence is SSVIFYETMYVGIVLLGLIAF. The Cytoplasmic portion of the chain corresponds to 31 to 35; that stretch reads DRFLK. The helical transmembrane segment at 36 to 56 threads the bilayer; it reads IIRPLRNIFLKKTVFAKTVSV. The Extracellular segment spans residues 57–85; that stretch reads FIWSFFFFISLPNMILSNKEATPSSVKKC. Residues 86-106 traverse the membrane as a helical segment; it reads ASLKGPLGLKWHQIVNNISQF. The Cytoplasmic segment spans residues 107 to 126; that stretch reads IFWTVFVLMLVFYVVIAKKV. The chain crosses the membrane as a helical span at residues 127–147; the sequence is YDSYRKSKSKDRKNNKKLEGK. The Extracellular portion of the chain corresponds to 148–174; sequence VFVVVAVFFVCFAPFHFTRVPYTYSQT. Residues 175–195 traverse the membrane as a helical segment; it reads NNKTDCRLQNQLFIAKETTLF. The Cytoplasmic portion of the chain corresponds to 196-245; that stretch reads LAATNICMDPLIYIFLCKKFTEKLPCMRGRKTIASSQENQSSQTDNITLG.

Belongs to the G-protein coupled receptor 1 family.

It localises to the cell membrane. Receptor for ADP. Coupled to G(i)-proteins. May play a role in hematopoiesis and the immune system. The protein is P2Y purinoceptor 13 (P2RY13) of Macaca fascicularis (Crab-eating macaque).